We begin with the raw amino-acid sequence, 435 residues long: MSVPPFTIRPAAPRLDGPTGPVAVAPGVHWVGALDPGLRNFDVILKTANGTTYNAYAVRGSEGVAVIDTVKAEFAGDFFARLEAVARYDEIRLIVLNHLEPDHTGAVPELLRRAPQAQVRLSPRGLPMLRALLKDDFERYDIKGVTTGQSVSLGDRDLQFFTTPFVHWPDTQCTWLAAERVLFTCDLFGSHYCDGRLFNDLVGDFRFSFEYYFDRIMRPFRSFVAQALDLIEPLDFGIIAPAHGPILRSHPRDYLTHTRRLISSRLAAETGSEKTLLIFYVSAYGATAQLAQAIHDGAAESPDVRVSLFDLEGGEITPFLDLIEEADGIALGTPTINGDAVRTIWEMLAALVDIETRGKLGAAFGSYGWSGEAVRLVETRLQGLKMRLPEPGLRVKLHPSAAELEEGRAFGRRLADHLTGRAAPREVDFAEIAAR.

Residues 48-228 are zinc metallo-hydrolase; the sequence is ANGTTYNAYA…PFRSFVAQAL (181 aa). His-98, Glu-100, Asp-102, His-167, Asp-186, and His-243 together coordinate Fe cation. In terms of domain architecture, Flavodoxin-like spans 276–415; it reads LLIFYVSAYG…EGRAFGRRLA (140 aa).

In the N-terminal section; belongs to the zinc metallo-hydrolase group 3 family. Homodimer. The cofactor is FMN. Fe cation is required as a cofactor.

Low-potential electron donor to a number of redox enzymes. The polypeptide is Type A flavoprotein fprA (fprA) (Rhodobacter capsulatus (strain ATCC BAA-309 / NBRC 16581 / SB1003)).